The chain runs to 469 residues: ATP-dependent protease ATPase subunit HslU (469 aa).

ATP contacts are provided by residues I24, G66 to E71, D282, E347, and R419.

Belongs to the ClpX chaperone family. HslU subfamily. In terms of assembly, a double ring-shaped homohexamer of HslV is capped on each side by a ring-shaped HslU homohexamer. The assembly of the HslU/HslV complex is dependent on binding of ATP.

It localises to the cytoplasm. Its function is as follows. ATPase subunit of a proteasome-like degradation complex; this subunit has chaperone activity. The binding of ATP and its subsequent hydrolysis by HslU are essential for unfolding of protein substrates subsequently hydrolyzed by HslV. HslU recognizes the N-terminal part of its protein substrates and unfolds these before they are guided to HslV for hydrolysis. The sequence is that of ATP-dependent protease ATPase subunit HslU from Listeria monocytogenes serotype 4b (strain CLIP80459).